Reading from the N-terminus, the 314-residue chain is Nucleoprotein (314 aa).

M1 bears the N-acetylmethionine; by host mark. Residues Y38, Y41, R118, K237, and S266 each coordinate RNA.

Belongs to the tenuiviruses nucleocapsid protein family.

The protein resides in the virion. The protein localises to the host cytoplasm. Functionally, encapsidates the genome, protecting it from nucleases. The encapsidated genomic RNA is termed the nucleocapsid (NC), and serves as template for viral transcription and replication. The polypeptide is Nucleoprotein (Wheat yellow head virus (WYHV)).